A 573-amino-acid chain; its full sequence is Methionine--tRNA ligase (573 aa).

The short motif at 10–20 (PYVNSVPHLGN) is the 'HIGH' region element. 4 residues coordinate Zn(2+): cysteine 143, cysteine 146, cysteine 156, and cysteine 159. Positions 333-337 (KFSKS) match the 'KMSKS' region motif. Lysine 336 lines the ATP pocket.

The protein belongs to the class-I aminoacyl-tRNA synthetase family. MetG type 1 subfamily. Requires Zn(2+) as cofactor.

The protein localises to the cytoplasm. It carries out the reaction tRNA(Met) + L-methionine + ATP = L-methionyl-tRNA(Met) + AMP + diphosphate. Functionally, is required not only for elongation of protein synthesis but also for the initiation of all mRNA translation through initiator tRNA(fMet) aminoacylation. This chain is Methionine--tRNA ligase, found in Saccharolobus islandicus (strain M.14.25 / Kamchatka #1) (Sulfolobus islandicus).